Here is a 316-residue protein sequence, read N- to C-terminus: Pantothenate kinase (316 aa).

95–102 (GSVAVGKS) contributes to the ATP binding site.

This sequence belongs to the prokaryotic pantothenate kinase family.

The protein resides in the cytoplasm. It catalyses the reaction (R)-pantothenate + ATP = (R)-4'-phosphopantothenate + ADP + H(+). It participates in cofactor biosynthesis; coenzyme A biosynthesis; CoA from (R)-pantothenate: step 1/5. This Photorhabdus laumondii subsp. laumondii (strain DSM 15139 / CIP 105565 / TT01) (Photorhabdus luminescens subsp. laumondii) protein is Pantothenate kinase.